The sequence spans 757 residues: Polyribonucleotide nucleotidyltransferase (757 aa).

Residues D488 and D494 each coordinate Mg(2+). Residues 555-614 enclose the KH domain; sequence PKLYTMKINAEKIRDVIGKGGAVIRALTEETGCQINIEEDGTITIAATDAAKADIAKRRI. The S1 motif domain occupies 624-692; it reads GKIYEGPVTK…ERGRVKLSMK (69 aa). The interval 693 to 757 is disordered; that stretch reads VLAERPAPGS…ADTGSGQRVG (65 aa). The span at 720-736 shows a compositional bias: basic and acidic residues; that stretch reads ALAEREPRREMRDHGHP. Low complexity predominate over residues 737 to 747; the sequence is PSEQQQQQSPP.

Belongs to the polyribonucleotide nucleotidyltransferase family. Mg(2+) serves as cofactor.

The protein localises to the cytoplasm. It carries out the reaction RNA(n+1) + phosphate = RNA(n) + a ribonucleoside 5'-diphosphate. Functionally, involved in mRNA degradation. Catalyzes the phosphorolysis of single-stranded polyribonucleotides processively in the 3'- to 5'-direction. This is Polyribonucleotide nucleotidyltransferase from Verminephrobacter eiseniae (strain EF01-2).